A 182-amino-acid chain; its full sequence is Envelope glycoprotein L (182 aa).

The first 39 residues, 1–39 (MRRSAARGRAVSSTQTAMGAGAAIAVWAAALIALYSSCA), serve as a signal peptide directing secretion. The gL alphaherpesvirus-type domain occupies 52 to 182 (ANASDTIGRL…RPEKTAPGGV (131 aa)). A disulfide bridge links C73 with C109.

The protein belongs to the herpesviridae glycoprotein L (gL) family. Alphaherpesvirinae gL subfamily. Interacts with glycoprotein H (gH); this interaction is necessary for the correct processing and cell surface expression of gH. The heterodimer gH/gL seems to interact with gB trimers during fusion. In terms of processing, O-glycosylated, and sialylated.

It is found in the virion membrane. The protein resides in the host cell membrane. The protein localises to the host Golgi apparatus. Its subcellular location is the host trans-Golgi network. The heterodimer glycoprotein H-glycoprotein L is required for the fusion of viral and plasma membranes leading to virus entry into the host cell. Acts as a functional inhibitor of gH and maintains gH in an inhibited form. Upon binding to host integrins, gL dissociates from gH leading to activation of the viral fusion glycoproteins gB and gH. This is Envelope glycoprotein L from Amazona oratrix (yellow-headed parrot).